A 64-amino-acid chain; its full sequence is Large ribosomal subunit protein bL35 (64 aa).

The protein belongs to the bacterial ribosomal protein bL35 family.

The sequence is that of Large ribosomal subunit protein bL35 from Acinetobacter baylyi (strain ATCC 33305 / BD413 / ADP1).